The chain runs to 458 residues: Protochlorophyllide reductase, chloroplastic (458 aa).

This sequence belongs to the short-chain dehydrogenases/reductases (SDR) family. POR subfamily.

Its subcellular location is the plastid. The protein localises to the chloroplast. The catalysed reaction is chlorophyllide a + NADP(+) = protochlorophyllide a + NADPH + H(+). Its pathway is porphyrin-containing compound metabolism; chlorophyll biosynthesis. Its function is as follows. Phototransformation of protochlorophyllide (Pchlide) to chlorophyllide (Chlide). The protein is Protochlorophyllide reductase, chloroplastic (PORA) of Marchantia paleacea (Liverwort).